The chain runs to 25 residues: Caerin-1.2 (25 aa).

Leu25 is modified (leucine amide).

Expressed by the skin parotoid and/or rostral glands.

The protein resides in the secreted. Functionally, antibacterial peptide, that adopts an alpha helical conformation which can disrupt bacterial membranes. Each caerin displays a different antimicrobial specificity. This Ranoidea caerulea (Green tree frog) protein is Caerin-1.2.